Reading from the N-terminus, the 344-residue chain is Polyhomeotic-like protein 2 (344 aa).

A compositionally biased stretch (polar residues) spans 1–23; that stretch reads MTSGNGSSPVPTAATGNRTQNGE. The interval 1-28 is disordered; it reads MTSGNGSSPVPTAATGNRTQNGENKPPQ. The HD1 signature appears at 25-53; that stretch reads KPPQAVVKPQILTHFIEGFVIQEGAQPFP. Residues 114–148 form an FCS-type zinc finger; it reads GDGDPPKLKCELCGRVDFEYKFKRSKRFCSMACAK. Zn(2+)-binding residues include C123, C126, C142, and C146. The tract at residues 165–269 is disordered; the sequence is RSKLQKPTVA…LHSRDPIAMS (105 aa). The span at 173-183 shows a compositional bias: basic residues; it reads VAKHARRRSRK. Residues 216–233 are compositionally biased toward polar residues; sequence KLSNSQEDSSRCSDNSSY. Over residues 234-248 the composition is skewed to low complexity; sequence EEPLSPMSASSSLSR. In terms of domain architecture, SAM spans 280-344; that stretch reads WNVEDVYDFV…YARISMLKDS (65 aa).

Component of a PRC1-like complex.

It is found in the nucleus. In terms of biological role, component of a Polycomb group (PcG) multiprotein PRC1-like complex, a complex class required to maintain the transcriptionally repressive state of many genes, including Hox genes, throughout development. PcG PRC1 complex acts via chromatin remodeling and modification of histones; it mediates monoubiquitination of histone H2A 'Lys-119', rendering chromatin heritably changed in its expressibility. The chain is Polyhomeotic-like protein 2 (phc2) from Xenopus laevis (African clawed frog).